The following is a 137-amino-acid chain: Probable 4-amino-4-deoxy-L-arabinose-phosphoundecaprenol flippase subunit ArnF (137 aa).

Residues 1–3 (MNA) lie on the Cytoplasmic side of the membrane. The helical transmembrane segment at 4 to 24 (LRGWLAALGSVLLASAAQLGM) threads the bilayer. The Periplasmic segment spans residues 25 to 44 (RWGMSRLPLPEAWAGQTPER). The chain crosses the membrane as a helical span at residues 45–65 (AALLAVALAVAAYAASLLCWL). Residues 66–76 (AALRHLPLGRA) lie on the Cytoplasmic side of the membrane. A helical transmembrane segment spans residues 77-97 (YSLLSASYALVYLLAASLPAF). Residues 98-100 (DET) are Periplasmic-facing. A helical transmembrane segment spans residues 101–121 (FSTSKTLGVGLVVLGVLTVNA). At 122 to 137 (RRTAAAPAHHPSRKAP) the chain is on the cytoplasmic side.

This sequence belongs to the ArnF family. In terms of assembly, heterodimer of ArnE and ArnF.

The protein resides in the cell inner membrane. The protein operates within bacterial outer membrane biogenesis; lipopolysaccharide biosynthesis. In terms of biological role, translocates 4-amino-4-deoxy-L-arabinose-phosphoundecaprenol (alpha-L-Ara4N-phosphoundecaprenol) from the cytoplasmic to the periplasmic side of the inner membrane. This Pseudomonas aeruginosa (strain ATCC 15692 / DSM 22644 / CIP 104116 / JCM 14847 / LMG 12228 / 1C / PRS 101 / PAO1) protein is Probable 4-amino-4-deoxy-L-arabinose-phosphoundecaprenol flippase subunit ArnF.